A 377-amino-acid polypeptide reads, in one-letter code: Succinyl-diaminopimelate desuccinylase (377 aa).

Residue His66 participates in Zn(2+) binding. Asp68 is a catalytic residue. A Zn(2+)-binding site is contributed by Asp99. The active-site Proton acceptor is Glu133. Zn(2+)-binding residues include Glu134, Glu162, and His348.

The protein belongs to the peptidase M20A family. DapE subfamily. Homodimer. Zn(2+) serves as cofactor. The cofactor is Co(2+).

The enzyme catalyses N-succinyl-(2S,6S)-2,6-diaminopimelate + H2O = (2S,6S)-2,6-diaminopimelate + succinate. The protein operates within amino-acid biosynthesis; L-lysine biosynthesis via DAP pathway; LL-2,6-diaminopimelate from (S)-tetrahydrodipicolinate (succinylase route): step 3/3. Functionally, catalyzes the hydrolysis of N-succinyl-L,L-diaminopimelic acid (SDAP), forming succinate and LL-2,6-diaminopimelate (DAP), an intermediate involved in the bacterial biosynthesis of lysine and meso-diaminopimelic acid, an essential component of bacterial cell walls. This is Succinyl-diaminopimelate desuccinylase from Marinomonas sp. (strain MWYL1).